Reading from the N-terminus, the 342-residue chain is Prenyl transferase ptmC (342 aa).

The helical transmembrane segment at 17-37 threads the bilayer; that stretch reads LSFLTLTVGALALIVVLYISI. H110 serves as a coordination point for isopentenyl diphosphate. Mg(2+)-binding residues include D117 and D121. Residue R126 participates in dimethylallyl diphosphate binding. N154 carries an N-linked (GlcNAc...) asparagine glycan. Residues K210, T211, Q240, N247, and K257 each coordinate dimethylallyl diphosphate.

The protein belongs to the FPP/GGPP synthase family.

It is found in the membrane. It functions in the pathway secondary metabolite biosynthesis. Its function is as follows. Prenyl transferase; part of the gene cluster that mediates the biosynthesis of the indole diterpenes penitrems. The geranylgeranyl diphosphate (GGPP) synthase ptmG catalyzes the first step in penitrem biosynthesis via conversion of farnesyl pyrophosphate and isopentyl pyrophosphate into geranylgeranyl pyrophosphate (GGPP). Condensation of indole-3-glycerol phosphate with GGPP by the prenyl transferase ptmC then forms 3-geranylgeranylindole (3-GGI). Epoxidation by the FAD-dependent monooxygenase ptmM leads to a epoxidized-GGI that is substrate of the terpene cyclase ptmB for cyclization to yield paspaline. Paspaline is subsequently converted to 13-desoxypaxilline by the cytochrome P450 monooxygenase ptmP, the latter being then converted to paxilline by the cytochrome P450 monooxygenase ptmQ. Paxilline is converted to beta-paxitriol via C-10 ketoreduction by the short-chain dehydrogenase ptmH which can be monoprenylated at the C-20 by the indole diterpene prenyltransferase ptmD. A two-step elimination (acetylation and elimination) process performed by the O-acetyltransferase ptmV and ptmI leads to the production of the prenylated form of penijanthine. The FAD-linked oxidoreductase ptmO then converts the prenylated form of penijanthine into PC-M5 which is in turn transformed into PC-M4 by the aromatic dimethylallyltransferase ptmE. Five sequential oxidative transformations performed by the cytochrome P450 monooxygenases ptmK, ptmU, ptmL, ptmN and ptmJ yield the various penitrem compounds. PtmK, ptmU and ptmM are involved in the formation of the key bicyclic ring of penitrem C via the formation of the intermediates secopenitrem D and penitrem D. PtmL catalyzes the epoxidation of penitrem D and C to yield penitrem B and F, respectively. PtmJ catalyzes the last benzylic hydroxylation to convert penitrem B to prenitrem E and penitrem F to penitrem A. The sequence is that of Prenyl transferase ptmC from Penicillium ochrochloron.